Here is a 361-residue protein sequence, read N- to C-terminus: Phosphoserine aminotransferase (361 aa).

Arg42 provides a ligand contact to L-glutamate. Residues 76-77 (AT), Trp102, Thr152, Asp172, and Gln195 each bind pyridoxal 5'-phosphate. Lys196 carries the N6-(pyridoxal phosphate)lysine modification. 237-238 (NT) contacts pyridoxal 5'-phosphate.

The protein belongs to the class-V pyridoxal-phosphate-dependent aminotransferase family. SerC subfamily. As to quaternary structure, homodimer. Pyridoxal 5'-phosphate is required as a cofactor.

Its subcellular location is the cytoplasm. The enzyme catalyses O-phospho-L-serine + 2-oxoglutarate = 3-phosphooxypyruvate + L-glutamate. It catalyses the reaction 4-(phosphooxy)-L-threonine + 2-oxoglutarate = (R)-3-hydroxy-2-oxo-4-phosphooxybutanoate + L-glutamate. It participates in amino-acid biosynthesis; L-serine biosynthesis; L-serine from 3-phospho-D-glycerate: step 2/3. The protein operates within cofactor biosynthesis; pyridoxine 5'-phosphate biosynthesis; pyridoxine 5'-phosphate from D-erythrose 4-phosphate: step 3/5. Functionally, catalyzes the reversible conversion of 3-phosphohydroxypyruvate to phosphoserine and of 3-hydroxy-2-oxo-4-phosphonooxybutanoate to phosphohydroxythreonine. The sequence is that of Phosphoserine aminotransferase from Xanthomonas campestris pv. campestris (strain 8004).